Reading from the N-terminus, the 135-residue chain is MKMIEVVAAIIERDGKILLAQRPAQSDQAGLWEFAGGKVEPDESQRQALVRELREELGIEATVGEYVASHQREVSGRIIHLHAWHVPDFHGTLQAHEHQALVWCSPEEALQYPLAPADIPLLEAFMALRAARPAD.

The Nudix hydrolase domain maps to 2–127 (KMIEVVAAII…DIPLLEAFMA (126 aa)). Residues 34-39 (FAGGKV), Arg72, and Asp118 contribute to the substrate site. Residues 37–58 (GKVEPDESQRQALVRELREELG) carry the Nudix box motif.

It belongs to the Nudix hydrolase family. Monomer. Requires Mg(2+) as cofactor. Mn(2+) is required as a cofactor.

The enzyme catalyses CTP + H2O = CMP + diphosphate + H(+). The catalysed reaction is dCTP + H2O = dCMP + diphosphate + H(+). Its function is as follows. Hydrolase with a preference for pyrimidine substrates. Has high activity with 5-methyl-dCTP, and much lower activity with CTP, dCTP, 5-hydroxy-dCTP, 2-hydroxy-dATP and 8-hydroxy-dGTP. The protein is CTP pyrophosphohydrolase (nudG) of Escherichia coli (strain K12).